Here is an 86-residue protein sequence, read N- to C-terminus: Large ribosomal subunit protein bL27c (86 aa).

Positions 1–27 (MAHKKGSGSTRNGRDSNSKRLGVKKYG) are disordered.

Belongs to the bacterial ribosomal protein bL27 family.

Its subcellular location is the plastid. The protein localises to the chloroplast. The polypeptide is Large ribosomal subunit protein bL27c (rpl27) (Porphyra purpurea (Red seaweed)).